Consider the following 51-residue polypeptide: MREKIKLESSAGTGHFYTTTKNKRANPEKLELKKFDPVARKHVMYKETKLK.

A disordered region spans residues 1–23 (MREKIKLESSAGTGHFYTTTKNK). A compositionally biased stretch (polar residues) spans 10-20 (SAGTGHFYTTT).

This sequence belongs to the bacterial ribosomal protein bL33 family.

This is Large ribosomal subunit protein bL33 from Nitrosomonas eutropha (strain DSM 101675 / C91 / Nm57).